Consider the following 210-residue polypeptide: Ribosomal RNA small subunit methyltransferase G (210 aa).

S-adenosyl-L-methionine is bound by residues Gly74, Phe79, 127 to 128, and Arg143; that span reads IE.

Belongs to the methyltransferase superfamily. RNA methyltransferase RsmG family.

Its subcellular location is the cytoplasm. The catalysed reaction is guanosine(527) in 16S rRNA + S-adenosyl-L-methionine = N(7)-methylguanosine(527) in 16S rRNA + S-adenosyl-L-homocysteine. Its function is as follows. Specifically methylates the N7 position of guanine in position 527 of 16S rRNA. The chain is Ribosomal RNA small subunit methyltransferase G from Chelativorans sp. (strain BNC1).